Consider the following 354-residue polypeptide: UPF0283 membrane protein Meso_1416 (354 aa).

The disordered stretch occupies residues 1-28 (MSEPRRPAAFRIEPAPSPSPEATREDVR). 2 helical membrane-spanning segments follow: residues 71 to 91 (LGAV…GLWA) and 105 to 125 (LGWL…AIVV).

This sequence belongs to the UPF0283 family.

The protein resides in the cell inner membrane. This Chelativorans sp. (strain BNC1) protein is UPF0283 membrane protein Meso_1416.